The following is a 166-amino-acid chain: Interleukin-3 (166 aa).

An N-terminal signal peptide occupies residues 1–27 (MVLASSTTSILCMLLPLLMLFHQGLQI). Cystine bridges form between cysteine 43–cysteine 106 and cysteine 105–cysteine 166. 2 N-linked (GlcNAc...) asparagine glycosylation sites follow: asparagine 60 and asparagine 70. Residues 145–166 (SVSRPPQPTSSSDNFRPMTVEC) are disordered.

The protein belongs to the IL-3 family. In terms of assembly, monomer. In terms of tissue distribution, activated T-cells, mast cells, natural killer cells.

It is found in the secreted. In terms of biological role, cytokine secreted predominantly by activated T-lymphocytes as well as mast cells and osteoblastic cells that controls the production and differentiation of hematopoietic progenitor cells into lineage-restricted cells. Also stimulates mature basophils, eosinophils, and monocytes to become functionally activated. In addition, plays an important role in neural cell proliferation and survival. Participates as well in bone homeostasis and inhibits osteoclast differentiation by preventing NF-kappa-B nuclear translocation and activation. Mechanistically, exerts its biological effects through a receptor composed of IL3RA subunit and a signal transducing subunit IL3RB. Receptor stimulation results in the rapid activation of JAK2 kinase activity leading to STAT5-mediated transcriptional program. Alternatively, contributes to cell survival under oxidative stress in non-hematopoietic systems by activating pathways mediated by PI3K/AKT and ERK. This is Interleukin-3 (Il3) from Rattus norvegicus (Rat).